A 358-amino-acid chain; its full sequence is Hydroxyproline O-arabinosyltransferase 2 (358 aa).

A helical; Signal-anchor transmembrane segment spans residues 7-26 (YFFPILMTLSLFLIIRYNYI).

Ubiquitous.

Its subcellular location is the golgi apparatus. The protein resides in the cis-Golgi network membrane. The enzyme catalyses trans-4-hydroxy-L-prolyl-[protein] + UDP-beta-L-arabinofuranose = O-(beta-L-arabinofuranosyl)-trans-4-hydroxy-L-prolyl-[protein] + UDP + H(+). Its function is as follows. Glycosyltransferase involved in the O-arabinosylation of several proteins including extensins and small signaling peptides. Catalyzes the transfer of the initial L-arabinose to the hydroxyl group of Hyp residues. Contributes redundantly with HPAT1 and HPAT3 to arabinosylation of EXT3. This chain is Hydroxyproline O-arabinosyltransferase 2, found in Arabidopsis thaliana (Mouse-ear cress).